Reading from the N-terminus, the 375-residue chain is 23S rRNA (uracil(747)-C(5))-methyltransferase RlmC (375 aa).

Residues C3, C11, C14, and C87 each contribute to the [4Fe-4S] cluster site. Residues Q212, F241, E262, and N307 each contribute to the S-adenosyl-L-methionine site. C334 acts as the Nucleophile in catalysis.

The protein belongs to the class I-like SAM-binding methyltransferase superfamily. RNA M5U methyltransferase family. RlmC subfamily.

The catalysed reaction is uridine(747) in 23S rRNA + S-adenosyl-L-methionine = 5-methyluridine(747) in 23S rRNA + S-adenosyl-L-homocysteine + H(+). Functionally, catalyzes the formation of 5-methyl-uridine at position 747 (m5U747) in 23S rRNA. This Escherichia coli O139:H28 (strain E24377A / ETEC) protein is 23S rRNA (uracil(747)-C(5))-methyltransferase RlmC.